The chain runs to 226 residues: ATP-dependent dethiobiotin synthetase BioD (226 aa).

12 to 17 (GVGKTV) lines the ATP pocket. Thr16 is a binding site for Mg(2+). Residue Lys37 is part of the active site. Thr41 serves as a coordination point for substrate. Residues Asp49, 108–111 (EGAG), 169–170 (GS), and 197–199 (PAG) contribute to the ATP site. Positions 49 and 108 each coordinate Mg(2+).

This sequence belongs to the dethiobiotin synthetase family. As to quaternary structure, homodimer. It depends on Mg(2+) as a cofactor.

The protein resides in the cytoplasm. It carries out the reaction (7R,8S)-7,8-diammoniononanoate + CO2 + ATP = (4R,5S)-dethiobiotin + ADP + phosphate + 3 H(+). The protein operates within cofactor biosynthesis; biotin biosynthesis; biotin from 7,8-diaminononanoate: step 1/2. Catalyzes a mechanistically unusual reaction, the ATP-dependent insertion of CO2 between the N7 and N8 nitrogen atoms of 7,8-diaminopelargonic acid (DAPA, also called 7,8-diammoniononanoate) to form a ureido ring. This chain is ATP-dependent dethiobiotin synthetase BioD, found in Mycobacterium leprae (strain Br4923).